Reading from the N-terminus, the 74-residue chain is Molt-inhibiting hormone (74 aa).

At glutamine 1 the chain carries Pyrrolidone carboxylic acid. Disulfide bonds link cysteine 7–cysteine 43, cysteine 23–cysteine 39, and cysteine 26–cysteine 52. Valine 72 is modified (valine amide).

It localises to the secreted. In terms of biological role, inhibits Y-organs where molting hormone (ecdysteroid) is secreted. A molting cycle is initiated when MIH secretion diminishes or stops. The sequence is that of Molt-inhibiting hormone from Procambarus bouvieri (Mexican crayfish).